A 381-amino-acid polypeptide reads, in one-letter code: Succinyl-diaminopimelate desuccinylase (381 aa).

His-76 lines the Zn(2+) pocket. The active site involves Asp-78. Asp-107 serves as a coordination point for Zn(2+). The Proton acceptor role is filled by Glu-140. Positions 141, 169, and 354 each coordinate Zn(2+).

Belongs to the peptidase M20A family. DapE subfamily. Homodimer. Zn(2+) serves as cofactor. Requires Co(2+) as cofactor.

The enzyme catalyses N-succinyl-(2S,6S)-2,6-diaminopimelate + H2O = (2S,6S)-2,6-diaminopimelate + succinate. It functions in the pathway amino-acid biosynthesis; L-lysine biosynthesis via DAP pathway; LL-2,6-diaminopimelate from (S)-tetrahydrodipicolinate (succinylase route): step 3/3. Catalyzes the hydrolysis of N-succinyl-L,L-diaminopimelic acid (SDAP), forming succinate and LL-2,6-diaminopimelate (DAP), an intermediate involved in the bacterial biosynthesis of lysine and meso-diaminopimelic acid, an essential component of bacterial cell walls. This Gluconobacter oxydans (strain 621H) (Gluconobacter suboxydans) protein is Succinyl-diaminopimelate desuccinylase.